A 417-amino-acid chain; its full sequence is Hydroxysteroid dehydrogenase-like protein 2 (417 aa).

Residues 17 to 23, Lys42, and Asp74 contribute to the NADP(+) site; that span reads GASRGIG. Tyr168 (proton acceptor) is an active-site residue. Lys172 is a binding site for NADP(+). The region spanning 306–414 is the SCP2 domain; that stretch reads ASPLQETFKA…KLEKILGQMN (109 aa).

Belongs to the short-chain dehydrogenases/reductases (SDR) family.

The protein localises to the peroxisome. It localises to the mitochondrion. Functionally, has apparently no steroid dehydrogenase activity. Might act as a metabolic regulator that affects systemic adaptation to nutritional cues. This is Hydroxysteroid dehydrogenase-like protein 2 (hsdl2) from Xenopus laevis (African clawed frog).